We begin with the raw amino-acid sequence, 206 residues long: Large ribosomal subunit protein uL4 (206 aa).

Residues 43–78 (ARSGNRAQKDREQVKHTTKKPWRQKGTGRARAGMSS) are disordered. A compositionally biased stretch (basic residues) spans 58–70 (HTTKKPWRQKGTG).

This sequence belongs to the universal ribosomal protein uL4 family. As to quaternary structure, part of the 50S ribosomal subunit.

Functionally, one of the primary rRNA binding proteins, this protein initially binds near the 5'-end of the 23S rRNA. It is important during the early stages of 50S assembly. It makes multiple contacts with different domains of the 23S rRNA in the assembled 50S subunit and ribosome. Forms part of the polypeptide exit tunnel. This chain is Large ribosomal subunit protein uL4, found in Polynucleobacter necessarius subsp. necessarius (strain STIR1).